The following is a 1334-amino-acid chain: SCAR-like protein 2 (1334 aa).

Residues 197–207 (KTGNFQREKKS) show a composition bias toward basic and acidic residues. 10 disordered regions span residues 197–281 (KTGN…SSFS), 294–331 (DTKPTVVPHENGHDKLSNNNLHKLSNTPLHTRLNGTSA), 481–516 (PDSSVAEFPDAYQNSSMPPAPESAADFPSLSSADAP), 568–602 (PNQSLPDSKEIPDSKAEDAPIDSPEKLEPGPSSYT), 643–668 (DKPTNEVSATNSSPDDTSSDEDTVES), 791–832 (STSH…KNII), 931–956 (FEKKTENDTNGLPKSSLFSSSHYSEK), 1000–1026 (FQLLPGSSVPQLGSGSESEDDTFGRSY), 1248–1268 (SGQQKLNGHEKSKAVGNDTKN), and 1280–1304 (RSKTFNLRRTNASKTNTSSPTTANS). Polar residues predominate over residues 241 to 256 (VQLTSRHFATPSTDGR). Over residues 310 to 319 (SNNNLHKLSN) the composition is skewed to low complexity. Positions 320 to 330 (TPLHTRLNGTS) are enriched in polar residues. A compositionally biased stretch (basic and acidic residues) spans 574-595 (DSKEIPDSKAEDAPIDSPEKLE). Residues 791-823 (STSHSSETNQSTVRTPDTVIGQTEGSTGCSTSF) show a composition bias toward polar residues. The segment covering 945–956 (SSLFSSSHYSEK) has biased composition (low complexity). Over residues 1248–1260 (SGQQKLNGHEKSK) the composition is skewed to basic and acidic residues. A WH2 domain is found at 1271–1289 (EREELLQQIRSKTFNLRRT). A compositionally biased stretch (low complexity) spans 1289-1304 (TNASKTNTSSPTTANS).

Belongs to the SCAR/WAVE family.

The protein localises to the cytoplasm. It is found in the cytoskeleton. Functionally, involved in regulation of actin and microtubule organization. Part of a WAVE complex that activates the Arp2/3 complex. This is SCAR-like protein 2 from Oryza sativa subsp. japonica (Rice).